Consider the following 890-residue polypeptide: Translation initiation factor IF-2 (890 aa).

Residues 110–216 (ISKPISKAPQ…KKPLIKTQDH (107 aa)) are disordered. A compositionally biased stretch (basic residues) spans 135-148 (VPKRKGLVIIKKKR). Over residues 184–199 (KSYNEPKNKENDDIKK) the composition is skewed to basic and acidic residues. Positions 200 to 210 (QKVKKEKKKPL) are enriched in basic residues. The 168-residue stretch at 387–554 (TRPPVVTIMG…NILLQAEILE (168 aa)) folds into the tr-type G domain. Residues 396–403 (GHVDHGKT) form a G1 region. Residue 396–403 (GHVDHGKT) coordinates GTP. Residues 421-425 (GITQH) form a G2 region. The segment at 442–445 (DTPG) is G3. GTP-binding positions include 442–446 (DTPGH) and 496–499 (NKMD). Residues 496-499 (NKMD) are G4. The segment at 532 to 534 (SAR) is G5.

It belongs to the TRAFAC class translation factor GTPase superfamily. Classic translation factor GTPase family. IF-2 subfamily.

The protein localises to the cytoplasm. Functionally, one of the essential components for the initiation of protein synthesis. Protects formylmethionyl-tRNA from spontaneous hydrolysis and promotes its binding to the 30S ribosomal subunits. Also involved in the hydrolysis of GTP during the formation of the 70S ribosomal complex. The sequence is that of Translation initiation factor IF-2 from Aliarcobacter butzleri (strain RM4018) (Arcobacter butzleri).